The following is a 519-amino-acid chain: ATP synthase subunit alpha (519 aa).

174 to 181 (GDRQTGKT) contributes to the ATP binding site.

Belongs to the ATPase alpha/beta chains family. In terms of assembly, F-type ATPases have 2 components, CF(1) - the catalytic core - and CF(0) - the membrane proton channel. CF(1) has five subunits: alpha(3), beta(3), gamma(1), delta(1), epsilon(1). CF(0) has three main subunits: a(1), b(2) and c(9-12). The alpha and beta chains form an alternating ring which encloses part of the gamma chain. CF(1) is attached to CF(0) by a central stalk formed by the gamma and epsilon chains, while a peripheral stalk is formed by the delta and b chains.

It localises to the cell inner membrane. It carries out the reaction ATP + H2O + 4 H(+)(in) = ADP + phosphate + 5 H(+)(out). In terms of biological role, produces ATP from ADP in the presence of a proton gradient across the membrane. The alpha chain is a regulatory subunit. The chain is ATP synthase subunit alpha from Acidovorax ebreus (strain TPSY) (Diaphorobacter sp. (strain TPSY)).